The sequence spans 528 residues: Probable rhamnogalacturonate lyase A (528 aa).

An N-terminal signal peptide occupies residues 1–20 (MFFQTGLLLSLSLWTKVAYA). 2 disulfides stabilise this stretch: cysteine 50–cysteine 93 and cysteine 184–cysteine 193. N-linked (GlcNAc...) asparagine glycosylation occurs at asparagine 56. Asparagine 351 carries N-linked (GlcNAc...) asparagine glycosylation.

The protein belongs to the polysaccharide lyase 4 family.

Its subcellular location is the secreted. The catalysed reaction is Endotype eliminative cleavage of L-alpha-rhamnopyranosyl-(1-&gt;4)-alpha-D-galactopyranosyluronic acid bonds of rhamnogalacturonan I domains in ramified hairy regions of pectin leaving L-rhamnopyranose at the reducing end and 4-deoxy-4,5-unsaturated D-galactopyranosyluronic acid at the non-reducing end.. Its function is as follows. Pectinolytic enzymes consist of four classes of enzymes: pectin lyase, polygalacturonase, pectin methylesterase and rhamnogalacturonase. Degrades the rhamnogalacturonan I (RG-I) backbone of pectin. Active against linseed rhamnogalacturonan. The polypeptide is Probable rhamnogalacturonate lyase A (rglA) (Aspergillus clavatus (strain ATCC 1007 / CBS 513.65 / DSM 816 / NCTC 3887 / NRRL 1 / QM 1276 / 107)).